The chain runs to 363 residues: NudC domain-containing protein 3 (363 aa).

Residues 120-143 form a disordered region; it reads AADLSGPQEVEKEEPPGSQDPEHT. Residues 128-143 are compositionally biased toward basic and acidic residues; the sequence is EVEKEEPPGSQDPEHT. The region spanning 187–279 is the CS domain; it reads AIRENYIWSQ…VGEYWWSAIL (93 aa). Phosphoserine occurs at positions 342 and 357.

This is NudC domain-containing protein 3 (Nudcd3) from Mus musculus (Mouse).